Here is a 419-residue protein sequence, read N- to C-terminus: L-rhamnose isomerase (419 aa).

Mn(2+) is bound by residues His-262, Asp-294, and Asp-296.

This sequence belongs to the rhamnose isomerase family. As to quaternary structure, homotetramer. Mn(2+) is required as a cofactor.

The protein localises to the cytoplasm. The catalysed reaction is L-rhamnopyranose = L-rhamnulose. It functions in the pathway carbohydrate degradation; L-rhamnose degradation; glycerone phosphate from L-rhamnose: step 1/3. Its function is as follows. Catalyzes the interconversion of L-rhamnose and L-rhamnulose. This Escherichia coli O6:H1 (strain CFT073 / ATCC 700928 / UPEC) protein is L-rhamnose isomerase.